A 258-amino-acid chain; its full sequence is Ribosomal RNA large subunit methyltransferase E (258 aa).

S-adenosyl-L-methionine-binding residues include glycine 58, tryptophan 60, aspartate 78, aspartate 96, and aspartate 120. Lysine 160 acts as the Proton acceptor in catalysis.

Belongs to the class I-like SAM-binding methyltransferase superfamily. RNA methyltransferase RlmE family.

It localises to the cytoplasm. The enzyme catalyses uridine(2552) in 23S rRNA + S-adenosyl-L-methionine = 2'-O-methyluridine(2552) in 23S rRNA + S-adenosyl-L-homocysteine + H(+). Its function is as follows. Specifically methylates the uridine in position 2552 of 23S rRNA at the 2'-O position of the ribose in the fully assembled 50S ribosomal subunit. The sequence is that of Ribosomal RNA large subunit methyltransferase E from Methanococcus maripaludis (strain DSM 14266 / JCM 13030 / NBRC 101832 / S2 / LL).